The primary structure comprises 485 residues: Glutamyl-tRNA(Gln) amidotransferase subunit A (485 aa).

Catalysis depends on charge relay system residues K78 and S153. S177 functions as the Acyl-ester intermediate in the catalytic mechanism.

This sequence belongs to the amidase family. GatA subfamily. As to quaternary structure, heterotrimer of A, B and C subunits.

The catalysed reaction is L-glutamyl-tRNA(Gln) + L-glutamine + ATP + H2O = L-glutaminyl-tRNA(Gln) + L-glutamate + ADP + phosphate + H(+). Allows the formation of correctly charged Gln-tRNA(Gln) through the transamidation of misacylated Glu-tRNA(Gln) in organisms which lack glutaminyl-tRNA synthetase. The reaction takes place in the presence of glutamine and ATP through an activated gamma-phospho-Glu-tRNA(Gln). In Geotalea daltonii (strain DSM 22248 / JCM 15807 / FRC-32) (Geobacter daltonii), this protein is Glutamyl-tRNA(Gln) amidotransferase subunit A.